Reading from the N-terminus, the 761-residue chain is Mitochondrial intermediate peptidase (761 aa).

A mitochondrion-targeting transit peptide spans 1–37 (MLIQKILLNKEISRLPRILSILNYTGLRWLSGSSGRN). His-547 lines the Zn(2+) pocket. The active site involves Glu-548. Zn(2+) contacts are provided by His-551 and His-554.

This sequence belongs to the peptidase M3 family. The cofactor is Zn(2+).

It is found in the mitochondrion matrix. It carries out the reaction Release of an N-terminal octapeptide as second stage of processing of some proteins imported into the mitochondrion.. Its function is as follows. Cleaves proteins, imported into the mitochondrion, to their mature size. While most mitochondrial precursor proteins are processed to the mature form in one step by mitochondrial processing peptidase (MPP), the sequential cleavage by MIP of an octapeptide after initial processing by MPP is a required step for a subgroup of nuclear-encoded precursor proteins destined for the matrix or the inner membrane. The protein is Mitochondrial intermediate peptidase (OCT1) of Candida glabrata (strain ATCC 2001 / BCRC 20586 / JCM 3761 / NBRC 0622 / NRRL Y-65 / CBS 138) (Yeast).